The sequence spans 422 residues: Phospholipase D Z (422 aa).

The signal sequence occupies residues 1–18; it reads MMMKLLFLIALFGCVVNS. An N-linked (GlcNAc...) asparagine glycan is attached at asparagine 53. In terms of domain architecture, PLD phosphodiesterase 1 spans 148 to 175; it reads GAGILHTKVIVVDQVSAYLGSANLDWRS. Active-site residues include histidine 153, lysine 155, and aspartate 160. N-linked (GlcNAc...) asparagine glycans are attached at residues asparagine 225 and asparagine 320. The PLD phosphodiesterase 2 domain occupies 357-383; it reads FTRVNHAKYMVTDEQSYVGTSNWSEDY. Residues histidine 362, lysine 364, and aspartate 369 contribute to the active site. Asparagine 378 carries an N-linked (GlcNAc...) asparagine glycan.

The protein belongs to the phospholipase D family.

It carries out the reaction a 1,2-diacyl-sn-glycero-3-phosphocholine + H2O = a 1,2-diacyl-sn-glycero-3-phosphate + choline + H(+). With respect to regulation, inhibited by butan-1-ol. Its function is as follows. Hydrolyzes membrane phospholipids, such as PtdCho (phosphatidylcholine), producing the free headgroup and PtdOH (phosphatidic acid; signaling molecule on its own). The protein is Phospholipase D Z (pldZ) of Dictyostelium discoideum (Social amoeba).